The primary structure comprises 1083 residues: Histone-lysine N-methyltransferase ATX2 (1083 aa).

The Nuclear localization signal signature appears at 77-84 (HRRPEIVH). Positions 315 to 379 (PRDIIWAKLT…VKQAVSFLKG (65 aa)) constitute a PWWP domain. The interval 422 to 443 (TDCSERINSGEEDSSNSGDDYT) is disordered. Positions 457–516 (DCLHRIGDLQIINLGRIVTDSEFFKDSKHTWPEGYTATRKFISLKDPNASAMYKMEVLRD) constitute an FYR N-terminal domain. The FYR C-terminal domain maps to 520-604 (KTRPVFRVTT…PPSKVSQRKY (85 aa)). The PHD-type 1 zinc-finger motif lies at 626 to 677 (LDKCNVCHMDEEYENNLFLQCDKCRMMVHTRCYGQLEPHNGILWLCNLCRPV). A C2HC pre-PHD-type zinc finger spans residues 682–715 (PPRCCLCPVVGGAMKPTTDGRWAHLACAIWIPET). Positions 682-807 (PPRCCLCPVV…RLLSFCKRHR (126 aa)) are extended PHD domain (ePHD). The segment at 739–807 (LLCSICGVSY…RLLSFCKRHR (69 aa)) adopts a PHD-type 2 zinc-finger fold. The 119-residue stretch at 919 to 1037 (KRLAFGKSGI…KWEELTYDYR (119 aa)) folds into the SET domain. H929 contributes to the S-adenosyl-L-methionine binding site. A glycan (O-linked (GlcNAc) serine) is linked at S968. S-adenosyl-L-methionine is bound by residues Y975 and 998 to 999 (NH). Residue C1001 participates in Zn(2+) binding. An S-adenosyl-L-methionine-binding site is contributed by Y1036. One can recognise a Post-SET domain in the interval 1043-1059 (ERLACYCGFPRCRGVVN). Residues C1047, C1049, and C1054 each contribute to the Zn(2+) site.

It belongs to the class V-like SAM-binding methyltransferase superfamily. Histone-lysine methyltransferase family. TRX/MLL subfamily. Activated via O-glycosylation. Expressed in roots, leaves and flowers and, to a lower extent, in young seedlings.

The protein resides in the nucleus. It carries out the reaction N(6)-methyl-L-lysyl-[histone] + S-adenosyl-L-methionine = N(6),N(6)-dimethyl-L-lysyl-[histone] + S-adenosyl-L-homocysteine + H(+). Histone methyltransferase. Dimethylates 'Lys-4' of histone H3 (H3K4me2). H3 'Lys-4' methylation represents a specific tag for epigenetic transcriptional activation. Methylates only a limited fraction of nucleosomes of target genes (e.g. NAP and XTH33). Involved in epigenetic regulation of the floral repressor FLC and FT to prevent the transition from vegetative to reproductive development. The chain is Histone-lysine N-methyltransferase ATX2 from Arabidopsis thaliana (Mouse-ear cress).